The following is a 96-amino-acid chain: Large ribosomal subunit protein eL43 (96 aa).

A C4-type zinc finger spans residues 41–62 (CPVCGFMKLKRISTSIWECKKC).

It belongs to the eukaryotic ribosomal protein eL43 family. Requires Zn(2+) as cofactor.

This Methanococcus aeolicus (strain ATCC BAA-1280 / DSM 17508 / OCM 812 / Nankai-3) protein is Large ribosomal subunit protein eL43.